A 192-amino-acid polypeptide reads, in one-letter code: Large ribosomal subunit protein bL9 (192 aa).

The disordered stretch occupies residues 172–192 (DALRPEDFFDPEADGIDEDEA). Residues 179 to 192 (FFDPEADGIDEDEA) are compositionally biased toward acidic residues.

The protein belongs to the bacterial ribosomal protein bL9 family.

Its function is as follows. Binds to the 23S rRNA. The protein is Large ribosomal subunit protein bL9 of Rhizobium etli (strain CIAT 652).